The sequence spans 416 residues: Tryptophan synthase beta chain (416 aa).

Lys-109 is subject to N6-(pyridoxal phosphate)lysine.

Belongs to the TrpB family. Tetramer of two alpha and two beta chains. Pyridoxal 5'-phosphate is required as a cofactor.

The catalysed reaction is (1S,2R)-1-C-(indol-3-yl)glycerol 3-phosphate + L-serine = D-glyceraldehyde 3-phosphate + L-tryptophan + H2O. Its pathway is amino-acid biosynthesis; L-tryptophan biosynthesis; L-tryptophan from chorismate: step 5/5. The beta subunit is responsible for the synthesis of L-tryptophan from indole and L-serine. The protein is Tryptophan synthase beta chain of Synechococcus sp. (strain WH7803).